We begin with the raw amino-acid sequence, 247 residues long: Cell division protein ZapD (247 aa).

The protein belongs to the ZapD family. As to quaternary structure, interacts with FtsZ.

The protein localises to the cytoplasm. Its function is as follows. Cell division factor that enhances FtsZ-ring assembly. Directly interacts with FtsZ and promotes bundling of FtsZ protofilaments, with a reduction in FtsZ GTPase activity. The polypeptide is Cell division protein ZapD (Salmonella choleraesuis (strain SC-B67)).